The primary structure comprises 275 residues: Trans-aconitate 2-methyltransferase (275 aa).

The protein belongs to the methyltransferase superfamily. Tam family.

The protein localises to the cytoplasm. The catalysed reaction is trans-aconitate + S-adenosyl-L-methionine = (E)-3-(methoxycarbonyl)pent-2-enedioate + S-adenosyl-L-homocysteine. Functionally, catalyzes the S-adenosylmethionine monomethyl esterification of trans-aconitate. The polypeptide is Trans-aconitate 2-methyltransferase (Pseudomonas aeruginosa (strain UCBPP-PA14)).